The following is a 401-amino-acid chain: L-rhamnonate dehydratase (401 aa).

Substrate is bound by residues His-29 and Arg-55. Positions 222, 248, and 276 each coordinate Mg(2+). His-325 functions as the Proton acceptor in the catalytic mechanism. Glu-345 is a binding site for substrate.

Belongs to the mandelate racemase/muconate lactonizing enzyme family. RhamD subfamily. In terms of assembly, homooctamer; tetramer of dimers. The cofactor is Mg(2+).

The enzyme catalyses L-rhamnonate = 2-dehydro-3-deoxy-L-rhamnonate + H2O. Functionally, catalyzes the dehydration of L-rhamnonate to 2-keto-3-deoxy-L-rhamnonate (KDR). This is L-rhamnonate dehydratase from Tolumonas auensis (strain DSM 9187 / NBRC 110442 / TA 4).